The following is a 66-amino-acid chain: Type 3 secretion system chaperone YscE (66 aa).

The protein belongs to the YscE family. As to quaternary structure, component of the heterodimeric YscE-YscG chaperone. The YscE-YscG chaperone forms a stable ternary complex with YscF/SctF.

It is found in the cytoplasm. Functionally, chaperone of the type III secretion system (T3SS), also called injectisome, which is used to inject bacterial effector proteins into eukaryotic host cells. Along with YscG, prevents premature polymerization of the YscF/SctF needle protein within the cytoplasm. Required for Yop secretion. In Yersinia enterocolitica, this protein is Type 3 secretion system chaperone YscE.